The sequence spans 288 residues: ATP synthase gamma chain (288 aa).

Belongs to the ATPase gamma chain family. F-type ATPases have 2 components, CF(1) - the catalytic core - and CF(0) - the membrane proton channel. CF(1) has five subunits: alpha(3), beta(3), gamma(1), delta(1), epsilon(1). CF(0) has three main subunits: a, b and c.

The protein localises to the cell inner membrane. Functionally, produces ATP from ADP in the presence of a proton gradient across the membrane. The gamma chain is believed to be important in regulating ATPase activity and the flow of protons through the CF(0) complex. This chain is ATP synthase gamma chain, found in Stutzerimonas stutzeri (strain A1501) (Pseudomonas stutzeri).